Here is a 330-residue protein sequence, read N- to C-terminus: Glucan endo-1,3-beta-glucosidase GIII (330 aa).

An N-terminal signal peptide occupies residues 1 to 25 (MARKGVDVAVALVLVALAAFPAVHS). The active-site Proton donor is glutamate 117. Catalysis depends on glutamate 255, which acts as the Nucleophile.

This sequence belongs to the glycosyl hydrolase 17 family.

The catalysed reaction is Hydrolysis of (1-&gt;3)-beta-D-glucosidic linkages in (1-&gt;3)-beta-D-glucans.. In terms of biological role, may provide a degree of protection against microbial invasion of germinated barley grain through its ability to degrade fungal cell wall polysaccharides. The polypeptide is Glucan endo-1,3-beta-glucosidase GIII (Hordeum vulgare (Barley)).